A 276-amino-acid chain; its full sequence is N-acyl homoserine lactonase AiiB (276 aa).

Residues His-111, His-113, His-116, His-191, Asp-213, and His-259 each coordinate Zn(2+).

This sequence belongs to the metallo-beta-lactamase superfamily. Zn(2+) is required as a cofactor.

It carries out the reaction an N-acyl-L-homoserine lactone + H2O = an N-acyl-L-homoserine + H(+). The sequence is that of N-acyl homoserine lactonase AiiB from Agrobacterium fabrum (strain C58 / ATCC 33970) (Agrobacterium tumefaciens (strain C58)).